Here is a 175-residue protein sequence, read N- to C-terminus: Adenine phosphoribosyltransferase (175 aa).

The protein belongs to the purine/pyrimidine phosphoribosyltransferase family. Homodimer.

The protein resides in the cytoplasm. The catalysed reaction is AMP + diphosphate = 5-phospho-alpha-D-ribose 1-diphosphate + adenine. Its pathway is purine metabolism; AMP biosynthesis via salvage pathway; AMP from adenine: step 1/1. Catalyzes a salvage reaction resulting in the formation of AMP, that is energically less costly than de novo synthesis. In Maricaulis maris (strain MCS10) (Caulobacter maris), this protein is Adenine phosphoribosyltransferase.